Reading from the N-terminus, the 277-residue chain is Thymidylate synthase (277 aa).

R21 is a binding site for dUMP. Position 51 (H51) interacts with (6R)-5,10-methylene-5,6,7,8-tetrahydrofolate. R139–R140 is a dUMP binding site. C159 serves as the catalytic Nucleophile. Residues R179–D182, N190, and H220–Y222 contribute to the dUMP site. D182 contributes to the (6R)-5,10-methylene-5,6,7,8-tetrahydrofolate binding site. A276 is a (6R)-5,10-methylene-5,6,7,8-tetrahydrofolate binding site.

The protein belongs to the thymidylate synthase family. Bacterial-type ThyA subfamily. As to quaternary structure, homodimer.

It is found in the cytoplasm. The enzyme catalyses dUMP + (6R)-5,10-methylene-5,6,7,8-tetrahydrofolate = 7,8-dihydrofolate + dTMP. It participates in pyrimidine metabolism; dTTP biosynthesis. Catalyzes the reductive methylation of 2'-deoxyuridine-5'-monophosphate (dUMP) to 2'-deoxythymidine-5'-monophosphate (dTMP) while utilizing 5,10-methylenetetrahydrofolate (mTHF) as the methyl donor and reductant in the reaction, yielding dihydrofolate (DHF) as a by-product. This enzymatic reaction provides an intracellular de novo source of dTMP, an essential precursor for DNA biosynthesis. The sequence is that of Thymidylate synthase from Roseobacter denitrificans (strain ATCC 33942 / OCh 114) (Erythrobacter sp. (strain OCh 114)).